We begin with the raw amino-acid sequence, 192 residues long: Elongation factor P (192 aa).

Belongs to the elongation factor P family.

It localises to the cytoplasm. It participates in protein biosynthesis; polypeptide chain elongation. In terms of biological role, involved in peptide bond synthesis. Stimulates efficient translation and peptide-bond synthesis on native or reconstituted 70S ribosomes in vitro. Probably functions indirectly by altering the affinity of the ribosome for aminoacyl-tRNA, thus increasing their reactivity as acceptors for peptidyl transferase. This Aquifex aeolicus (strain VF5) protein is Elongation factor P (efp).